The sequence spans 914 residues: Eukaryotic translation initiation factor 3 subunit C-like protein (914 aa).

A disordered region spans residues 1-44; the sequence is MSRFFTTGSDSESESSLSGEELVTKPVGGNYGKQPLLLSEDEED. Residues 8–21 show a composition bias toward low complexity; the sequence is GSDSESESSLSGEE. Serine 9, serine 11, serine 13, serine 15, serine 16, serine 18, and serine 39 each carry phosphoserine. Lysine 99 carries the N6-acetyllysine modification. Disordered regions lie at residues 157–302 and 523–543; these read TSYK…GGEW and QLTPPEGSSKSEQDQAENEGE. Serine 166, serine 178, serine 181, and serine 182 each carry phosphoserine. A compositionally biased stretch (acidic residues) spans 166–190; that stretch reads SADEDAEKNEEDSEGSSDEDEDEDG. Basic and acidic residues predominate over residues 199 to 216; that stretch reads KKSEAPSGESRKFLKKMD. A compositionally biased stretch (acidic residues) spans 217 to 232; that stretch reads DEDEDSEDSEDDEDWD. Over residues 261–278 the composition is skewed to basic and acidic residues; it reads PTTDEDKKAAEKKREDKA. The span at 291–300 shows a compositional bias: acidic residues; it reads EEEEEDNEGG. Over residues 523–532 the composition is skewed to polar residues; that stretch reads QLTPPEGSSK. A Phosphothreonine modification is found at threonine 525. An N6-acetyllysine modification is found at lysine 644. Residues 674–850 enclose the PCI domain; that stretch reads FHLHINLELL…QTVVMHRTEP (177 aa). A disordered region spans residues 886 to 914; sequence FRDQKDGYRKNEGYMRRGGYRQQQSQTAY. The span at 887 to 900 shows a compositional bias: basic and acidic residues; that stretch reads RDQKDGYRKNEGYM. At serine 910 the chain carries Phosphoserine.

Belongs to the eIF-3 subunit C family. As to quaternary structure, component of the eukaryotic translation initiation factor 3 (eIF-3) complex, which is composed of 13 subunits: EIF3A, EIF3B, EIF3C, EIF3D, EIF3E, EIF3F, EIF3G, EIF3H, EIF3I, EIF3J, EIF3K, EIF3L and EIF3M. The eIF-3 complex appears to include 3 stable modules: module A is composed of EIF3A, EIF3B, EIF3G and EIF3I; module B is composed of EIF3F, EIF3H, and EIF3M; and module C is composed of EIF3C, EIF3D, EIF3E, EIF3K and EIF3L. EIF3C of module C binds EIF3B of module A and EIF3H of module B, thereby linking the three modules. EIF3J is a labile subunit that binds to the eIF-3 complex via EIF3B. The eIF-3 complex interacts with RPS6KB1 under conditions of nutrient depletion. Mitogenic stimulation leads to binding and activation of a complex composed of MTOR and RPTOR, leading to phosphorylation and release of RPS6KB1 and binding of EIF4B to eIF-3. Phosphorylated. Phosphorylation is enhanced upon serum stimulation.

It is found in the cytoplasm. Functionally, component of the eukaryotic translation initiation factor 3 (eIF-3) complex, which is required for several steps in the initiation of protein synthesis. The eIF-3 complex associates with the 40S ribosome and facilitates the recruitment of eIF-1, eIF-1A, eIF-2:GTP:methionyl-tRNAi and eIF-5 to form the 43S pre-initiation complex (43S PIC). The eIF-3 complex stimulates mRNA recruitment to the 43S PIC and scanning of the mRNA for AUG recognition. The eIF-3 complex is also required for disassembly and recycling of post-termination ribosomal complexes and subsequently prevents premature joining of the 40S and 60S ribosomal subunits prior to initiation. The eIF-3 complex specifically targets and initiates translation of a subset of mRNAs involved in cell proliferation, including cell cycling, differentiation and apoptosis, and uses different modes of RNA stem-loop binding to exert either translational activation or repression. The sequence is that of Eukaryotic translation initiation factor 3 subunit C-like protein (EIF3CL) from Homo sapiens (Human).